Consider the following 190-residue polypeptide: Threonylcarbamoyl-AMP synthase (190 aa).

In terms of domain architecture, YrdC-like spans 7–190; the sequence is TGSSAAVVDL…ALTGELFRQG (184 aa).

The protein belongs to the SUA5 family. TsaC subfamily.

Its subcellular location is the cytoplasm. It catalyses the reaction L-threonine + hydrogencarbonate + ATP = L-threonylcarbamoyladenylate + diphosphate + H2O. Its function is as follows. Required for the formation of a threonylcarbamoyl group on adenosine at position 37 (t(6)A37) in tRNAs that read codons beginning with adenine. Catalyzes the conversion of L-threonine, HCO(3)(-)/CO(2) and ATP to give threonylcarbamoyl-AMP (TC-AMP) as the acyladenylate intermediate, with the release of diphosphate. The sequence is that of Threonylcarbamoyl-AMP synthase from Salmonella typhi.